The chain runs to 492 residues: Dipeptide permease D (492 aa).

Transmembrane regions (helical) follow at residues 14 to 34 (VVAL…LLIL), 49 to 69 (ALFS…GYLA), 91 to 111 (LVLG…AIIV), 138 to 158 (GGFS…PIAC), 167 to 187 (WAMG…IFLC), 212 to 232 (NWGW…VLFW), 236 to 256 (SVYA…RIYL), 269 to 289 (LIVV…QGGS), 312 to 332 (MFQS…AWLV), 344 to 364 (IWGK…ILTL), 379 to 399 (LMVL…PVAM), 413 to 433 (VLTG…AGVI), and 458 to 478 (VFSQ…VIWL).

Belongs to the major facilitator superfamily. Proton-dependent oligopeptide transporter (POT/PTR) (TC 2.A.17) family. DtpD subfamily.

It localises to the cell inner membrane. In terms of biological role, probable proton-dependent permease that transports dipeptides. The polypeptide is Dipeptide permease D (Klebsiella pneumoniae (strain 342)).